Consider the following 297-residue polypeptide: 33 kDa chaperonin (297 aa).

Intrachain disulfides connect Cys-232-Cys-234 and Cys-266-Cys-269.

This sequence belongs to the HSP33 family. Post-translationally, under oxidizing conditions two disulfide bonds are formed involving the reactive cysteines. Under reducing conditions zinc is bound to the reactive cysteines and the protein is inactive.

It is found in the cytoplasm. Its function is as follows. Redox regulated molecular chaperone. Protects both thermally unfolding and oxidatively damaged proteins from irreversible aggregation. Plays an important role in the bacterial defense system toward oxidative stress. This is 33 kDa chaperonin from Azotobacter vinelandii (strain DJ / ATCC BAA-1303).